A 293-amino-acid chain; its full sequence is Movement protein BC1 (293 aa).

The disordered stretch occupies residues Ser207–Ala228. The span at Ala209–Gly222 shows a compositional bias: polar residues.

It belongs to the begomovirus movement protein BC1 family. Binds to dimeric supercoiled plasmid DNA. Post-translationally, phosphorylated.

It localises to the host cell membrane. It is found in the host microsome membrane. Its subcellular location is the host endoplasmic reticulum membrane. In terms of biological role, movement protein involved in the cell-to-cell and systemic transport of viral genomic DNA. Begomoviruses use 2 proteins to transport their DNA from cell to cell. The nuclear shuttle protein (NSP) shuttles it between nucleus and cytoplasm and the movement protein (MP) probably transports the DNA-NSP complex to the cell periphery and facilitates further movement across the cell wall. In Tomato golden mosaic virus (strain Yellow vein) (TGMV), this protein is Movement protein BC1.